A 371-amino-acid polypeptide reads, in one-letter code: Bifunctional enzyme IspD/IspF (371 aa).

Residues M1–I210 form a 2-C-methyl-D-erythritol 4-phosphate cytidylyltransferase region. The 2-C-methyl-D-erythritol 2,4-cyclodiphosphate synthase stretch occupies residues F211–L371. D217 and H219 together coordinate a divalent metal cation. Residues D217–H219 and H243–S244 contribute to the 4-CDP-2-C-methyl-D-erythritol 2-phosphate site. Position 251 (H251) interacts with a divalent metal cation. 4-CDP-2-C-methyl-D-erythritol 2-phosphate is bound by residues D265 to G267, Y270 to D274, A309 to K315, T341 to E344, F348, and R351.

This sequence in the N-terminal section; belongs to the IspD/TarI cytidylyltransferase family. IspD subfamily. It in the C-terminal section; belongs to the IspF family. It depends on a divalent metal cation as a cofactor.

The enzyme catalyses 2-C-methyl-D-erythritol 4-phosphate + CTP + H(+) = 4-CDP-2-C-methyl-D-erythritol + diphosphate. The catalysed reaction is 4-CDP-2-C-methyl-D-erythritol 2-phosphate = 2-C-methyl-D-erythritol 2,4-cyclic diphosphate + CMP. It functions in the pathway isoprenoid biosynthesis; isopentenyl diphosphate biosynthesis via DXP pathway; isopentenyl diphosphate from 1-deoxy-D-xylulose 5-phosphate: step 2/6. Its pathway is isoprenoid biosynthesis; isopentenyl diphosphate biosynthesis via DXP pathway; isopentenyl diphosphate from 1-deoxy-D-xylulose 5-phosphate: step 4/6. In terms of biological role, bifunctional enzyme that catalyzes the formation of 4-diphosphocytidyl-2-C-methyl-D-erythritol from CTP and 2-C-methyl-D-erythritol 4-phosphate (MEP) (IspD), and catalyzes the conversion of 4-diphosphocytidyl-2-C-methyl-D-erythritol 2-phosphate (CDP-ME2P) to 2-C-methyl-D-erythritol 2,4-cyclodiphosphate (ME-CPP) with a corresponding release of cytidine 5-monophosphate (CMP) (IspF). The protein is Bifunctional enzyme IspD/IspF of Campylobacter jejuni subsp. jejuni serotype O:2 (strain ATCC 700819 / NCTC 11168).